The primary structure comprises 589 residues: MIMRMSSLFVRTLREDPADAEVPSHRLLVRAGYIRRAAPGIYTWLPLGLRVLRKIENVIREEMDAIGAQEMLFPALLPREPYEATNRWTEYGDGIFRLQDRKGADYLLGPTHEEMFTLVVKDLYSSYKDLPLSIYQIQTKYRDEARPRAGLLRGREFVMKDSYSFDVDDAGLDVSYQKHRDAYVRIFDRLGFEYVIVEAMSGAMGGSKSEEFLAKASVGEDTYVRCTLCDYAANVEAVHSPPIPPVPYDDAPAAHAEQTPDTPTIETLVAHLNERFPREDRPWAASDTLKNVVFSVHHPDGATEALAVGLPGDREVDAKRLEAHLGEGVVFEPFGEADFAARPTLAKGYIGPGALGEKKPAGVRYLLDPRVVEGTRWVTGADAAGSHVIDLVAGRDFSGDGLIEVAEVRDGDPCPRGDGGTLETARGIEMGHIFQLGRKYADALDLKVLDEQGKLVTVTMGSYGIGPSRAVAAIAEGTHDELGLAWPREVAPADVHIVATGKDEHVFAAAERIAHELDKQGVEVLYDDRPKVSPGVKFKDAELIGVPTIVVVGKGLAAGTIEVKDRRTGQRQDVPADHLVDRVIAIVRA.

This sequence belongs to the class-II aminoacyl-tRNA synthetase family. ProS type 1 subfamily. As to quaternary structure, homodimer.

The protein localises to the cytoplasm. It catalyses the reaction tRNA(Pro) + L-proline + ATP = L-prolyl-tRNA(Pro) + AMP + diphosphate. Catalyzes the attachment of proline to tRNA(Pro) in a two-step reaction: proline is first activated by ATP to form Pro-AMP and then transferred to the acceptor end of tRNA(Pro). As ProRS can inadvertently accommodate and process non-cognate amino acids such as alanine and cysteine, to avoid such errors it has two additional distinct editing activities against alanine. One activity is designated as 'pretransfer' editing and involves the tRNA(Pro)-independent hydrolysis of activated Ala-AMP. The other activity is designated 'posttransfer' editing and involves deacylation of mischarged Ala-tRNA(Pro). The misacylated Cys-tRNA(Pro) is not edited by ProRS. The protein is Proline--tRNA ligase of Nocardioides sp. (strain ATCC BAA-499 / JS614).